A 183-amino-acid chain; its full sequence is ATP-dependent protease subunit HslV (183 aa).

Thr-9 is a catalytic residue. Residues Ala-164, Cys-167, and Thr-170 each contribute to the Na(+) site.

The protein belongs to the peptidase T1B family. HslV subfamily. As to quaternary structure, a double ring-shaped homohexamer of HslV is capped on each side by a ring-shaped HslU homohexamer. The assembly of the HslU/HslV complex is dependent on binding of ATP.

It localises to the cytoplasm. The enzyme catalyses ATP-dependent cleavage of peptide bonds with broad specificity.. Its activity is regulated as follows. Allosterically activated by HslU binding. Its function is as follows. Protease subunit of a proteasome-like degradation complex believed to be a general protein degrading machinery. The protein is ATP-dependent protease subunit HslV of Hydrogenovibrio crunogenus (strain DSM 25203 / XCL-2) (Thiomicrospira crunogena).